A 529-amino-acid chain; its full sequence is ATP synthase F(1) complex catalytic subunit beta, mitochondrial (529 aa).

The transit peptide at 1–46 (MLSLVGRVASASASGALRGLNPLAALPQAHLLLRTAPAGVHPARDY) directs the protein to the mitochondrion. O-linked (GlcNAc) serine glycosylation is present at S106. Residues K124, K133, and K161 each carry the N6-acetyllysine; alternate modification. An N6-succinyllysine; alternate mark is found at K124, K133, and K161. At K198 the chain carries N6-acetyllysine. ADP is bound by residues G209, V210, G211, K212, T213, and V214. G209 contributes to the ATP binding site. Phosphate-binding residues include G209, V210, G211, K212, and T213. ATP contacts are provided by G211, K212, T213, and V214. T213 contributes to the Mg(2+) binding site. E238 is a Mg(2+) binding site. R239 contacts ATP. 2 positions are modified to N6-acetyllysine; alternate: K259 and K264. 2 positions are modified to N6-succinyllysine; alternate: K259 and K264. T312 is modified (phosphothreonine). S415 carries the post-translational modification Phosphoserine. The residue at position 426 (K426) is an N6-acetyllysine. S433 bears the Phosphoserine mark. 2 positions are modified to N6-acetyllysine: K480 and K485. N6-acetyllysine; alternate is present on K522. At K522 the chain carries N6-succinyllysine; alternate. S529 carries the post-translational modification Phosphoserine.

It belongs to the ATPase alpha/beta chains family. As to quaternary structure, homotrimer. Component of the ATP synthase complex composed at least of ATP5F1A/subunit alpha, ATP5F1B/subunit beta, ATP5MC1/subunit c (homooctomer), MT-ATP6/subunit a, MT-ATP8/subunit 8, ATP5ME/subunit e, ATP5MF/subunit f, ATP5MG/subunit g, ATP5MK/subunit k, ATP5MJ/subunit j, ATP5F1C/subunit gamma, ATP5F1D/subunit delta, ATP5F1E/subunit epsilon, ATP5PF/subunit F6, ATP5PB/subunit b, ATP5PD/subunit d, ATP5PO/subunit OSCP. ATP synthase complex consists of a soluble F(1) head domain (subunits alpha(3) and beta(3)) - the catalytic core - and a membrane F(0) domain - the membrane proton channel (subunits c, a, 8, e, f, g, k and j). These two domains are linked by a central stalk (subunits gamma, delta, and epsilon) rotating inside the F1 region and a stationary peripheral stalk (subunits F6, b, d, and OSCP). Interacts with PPIF. Interacts with BCL2L1 isoform BCL-X(L); the interaction mediates the association of BCL2L1 isoform BCL-X(L) with the mitochondrial membrane F(1)F(0) ATP synthase and enhances neurons metabolic efficiency. Interacts with CLN5 and PPT1. Interacts with S100A1; this interaction increases F1-ATPase activity. Interacts with MTLN. Interacts with TTC5/STRAP; the interaction results in decreased mitochondrial ATP production.

Its subcellular location is the mitochondrion inner membrane. The catalysed reaction is ATP + H2O + 4 H(+)(in) = ADP + phosphate + 5 H(+)(out). In terms of biological role, catalytic subunit beta, of the soluble F(1) head domain within the mitochondrial ATP synthase complex (F(1)F(0) ATP synthase or complex V) that produces ATP from ADP and phosphate inorganique in the presence of a proton gradient across the membrane which is generated by electron transport complexes of the respiratory chain. With the non-catalytic subunit alpha (ATP5F1A), forms the catalytic core in the F(1) domain. ATP synthase complex consist of two structural domains, F(1) - containing the extramembraneous catalytic core, and F(0) - containing the membrane proton channel, linked together by a central stalk and a peripheral stalk. During catalysis, ATP synthesis in the catalytic domain of F(1) is coupled via a rotary mechanism of the central stalk subunits to proton translocation. Its function is as follows. Catalytic subunit beta, of the mitochondrial membrane ATP synthase complex (F(1)F(0) ATP synthase or Complex V) that produces ATP from ADP in the presence of a proton gradient across the membrane which is generated by electron transport complexes of the respiratory chain. ATP synthase complex consist of a soluble F(1) head domain - the catalytic core - and a membrane F(1) domain - the membrane proton channel. These two domains are linked by a central stalk rotating inside the F(1) region and a stationary peripheral stalk. During catalysis, ATP synthesis in the catalytic domain of F(1) is coupled via a rotary mechanism of the central stalk subunits to proton translocation. In vivo, can only synthesize ATP although its ATP hydrolase activity can be activated artificially in vitro. With the subunit alpha (ATP5F1A), forms the catalytic core in the F(1) domain. In Rattus norvegicus (Rat), this protein is ATP synthase F(1) complex catalytic subunit beta, mitochondrial.